A 112-amino-acid chain; its full sequence is uncharacterized protein (112 aa).

The tract at residues 90–112 (KNFNNSKNDQIKKKKIDNNQVNL) is disordered.

This is an uncharacterized protein from Buchnera aphidicola subsp. Acyrthosiphon pisum (strain APS) (Acyrthosiphon pisum symbiotic bacterium).